Consider the following 696-residue polypeptide: Elongation factor G (696 aa).

The 281-residue stretch at 8–288 (EDYRNFGIMA…AVVEYLPSPA (281 aa)) folds into the tr-type G domain. GTP contacts are provided by residues 17–24 (AHIDAGKT), 86–90 (DTPGH), and 140–143 (NKMD).

The protein belongs to the TRAFAC class translation factor GTPase superfamily. Classic translation factor GTPase family. EF-G/EF-2 subfamily.

It localises to the cytoplasm. Functionally, catalyzes the GTP-dependent ribosomal translocation step during translation elongation. During this step, the ribosome changes from the pre-translocational (PRE) to the post-translocational (POST) state as the newly formed A-site-bound peptidyl-tRNA and P-site-bound deacylated tRNA move to the P and E sites, respectively. Catalyzes the coordinated movement of the two tRNA molecules, the mRNA and conformational changes in the ribosome. This Mesorhizobium japonicum (strain LMG 29417 / CECT 9101 / MAFF 303099) (Mesorhizobium loti (strain MAFF 303099)) protein is Elongation factor G.